The primary structure comprises 1194 residues: Immunoglobulin superfamily member 3 (1194 aa).

The first 19 residues, 1-19 (MKCFFPVLSCLAVLGVVSA), serve as a signal peptide directing secretion. 8 consecutive Ig-like C2-type domains span residues 20 to 138 (QRQV…AKMN), 143 to 262 (PDSL…WYAM), 276 to 386 (PTDK…KTVT), 401 to 539 (PIVV…VSIT), 545 to 661 (FAVT…WTRL), 676 to 803 (PVTK…EEVS), 813 to 945 (PDSR…TAVT), and 949 to 1097 (PDAA…YRLT). The Extracellular segment spans residues 20–1124 (QRQVTVQEGP…LQSLICSNDA (1105 aa)). 2 disulfides stabilise this stretch: cysteine 42/cysteine 120 and cysteine 167/cysteine 246. A glycan (N-linked (GlcNAc...) asparagine) is linked at asparagine 43. An EWI motif motif is present at residues 250–252 (EWI). A disulfide bridge connects residues cysteine 302 and cysteine 376. N-linked (GlcNAc...) asparagine glycosylation is present at asparagine 418. 5 cysteine pairs are disulfide-bonded: cysteine 432/cysteine 511, cysteine 566/cysteine 645, cysteine 701/cysteine 782, cysteine 838/cysteine 918, and cysteine 974/cysteine 1080. A glycan (N-linked (GlcNAc...) asparagine) is linked at asparagine 842. The tract at residues 997-1030 (GGGKRGSLGIDEQEEEEEEEDISQEEDSEDPTER) is disordered. Positions 1007 to 1026 (DEQEEEEEEEDISQEEDSED) are enriched in acidic residues. Residue asparagine 1077 is glycosylated (N-linked (GlcNAc...) asparagine). Residues 1125-1145 (LFYFVFFYPFPIFGILIITIL) form a helical membrane-spanning segment. Residues 1146-1194 (LVRFKSRNSSKNSEGKNGVPLLWIKEPHLNYSPTCLEPPVLSIHPGAID) are Cytoplasmic-facing.

Expressed in the lacrimal duct and lacrimal gland.

It localises to the membrane. The chain is Immunoglobulin superfamily member 3 (Igsf3) from Mus musculus (Mouse).